A 464-amino-acid polypeptide reads, in one-letter code: Asparagine--tRNA ligase (464 aa).

The protein belongs to the class-II aminoacyl-tRNA synthetase family. As to quaternary structure, homodimer.

It localises to the cytoplasm. The enzyme catalyses tRNA(Asn) + L-asparagine + ATP = L-asparaginyl-tRNA(Asn) + AMP + diphosphate + H(+). The sequence is that of Asparagine--tRNA ligase from Xanthomonas axonopodis pv. citri (strain 306).